A 327-amino-acid chain; its full sequence is Malate dehydrogenase (327 aa).

11-17 (GAAGQIS) provides a ligand contact to NAD(+). Residues arginine 92 and arginine 98 each contribute to the substrate site. NAD(+)-binding positions include asparagine 105, glutamine 112, and 129-131 (VGN). The substrate site is built by asparagine 131 and arginine 162. The active-site Proton acceptor is histidine 187.

The protein belongs to the LDH/MDH superfamily. MDH type 2 family.

It carries out the reaction (S)-malate + NAD(+) = oxaloacetate + NADH + H(+). In terms of biological role, catalyzes the reversible oxidation of malate to oxaloacetate. The protein is Malate dehydrogenase of Teredinibacter turnerae (strain ATCC 39867 / T7901).